The chain runs to 302 residues: MRSSIHASRLRKMGQSIPASTGPMARSANRFLQNRAAIFGLVLLTPLLFAVLTYPLWLPYKPNDIDLMAMNSAPSWKHWFGADGVGRDVFARTMEGGRISLLVAVSSVVLSTAIGFLIGAISALGGRWADAIAMRSVDLAMTLPPVIFLLVLASIIGSGIWSTVVVIALLSWPVLSRMIRARLLELREREFVMASRGMGAGLGHLLFRHGLPNSIDILVVYATLQVANAILLEAGLSFLGLGVPPPAASWGNMLNAARSTAVLEQFPWQWLFPGGALVLAVLAINFIGDGLRDAFDPRAELN.

The segment at 1 to 22 is disordered; sequence MRSSIHASRLRKMGQSIPASTG. 6 helical membrane passes run 38 to 58, 101 to 121, 147 to 167, 200 to 222, 230 to 250, and 268 to 288; these read IFGL…PLWL, LLVA…IGAI, IFLL…VVVI, AGLG…VVYA, ILLE…AASW, and WQWL…NFIG. The 192-residue stretch at 97-288 folds into the ABC transmembrane type-1 domain; sequence GRISLLVAVS…LAVLAINFIG (192 aa).

The protein belongs to the binding-protein-dependent transport system permease family. In terms of assembly, the complex is composed of two ATP-binding proteins (BOV_A0347 and BOV_A0348), two transmembrane proteins (BOV_A0350 and BOV_A0351) and a solute-binding protein (BOV_A0352).

The protein localises to the cell inner membrane. Probably part of an ABC transporter complex that could be involved in peptide import. Probably responsible for the translocation of the substrate across the membrane. This Brucella ovis (strain ATCC 25840 / 63/290 / NCTC 10512) protein is Putative peptide permease protein BOV_A0350.